Here is a 105-residue protein sequence, read N- to C-terminus: Small ribosomal subunit protein uS10 (105 aa).

This sequence belongs to the universal ribosomal protein uS10 family. In terms of assembly, part of the 30S ribosomal subunit.

In terms of biological role, involved in the binding of tRNA to the ribosomes. The protein is Small ribosomal subunit protein uS10 of Synechococcus elongatus (strain ATCC 33912 / PCC 7942 / FACHB-805) (Anacystis nidulans R2).